The chain runs to 202 residues: Small ribosomal subunit protein uS2 (202 aa).

Belongs to the universal ribosomal protein uS2 family.

The protein is Small ribosomal subunit protein uS2 (rps2) of Pyrococcus horikoshii (strain ATCC 700860 / DSM 12428 / JCM 9974 / NBRC 100139 / OT-3).